Here is a 22-residue protein sequence, read N- to C-terminus: Bacteriocin serracin-P 23 kDa subunit (22 aa).

Its function is as follows. Major component of a prophage tail tube. Functionally, antibacterial activity against Gram-negative bacterium E.amylovora. The polypeptide is Bacteriocin serracin-P 23 kDa subunit (Serratia plymuthica).